A 145-amino-acid polypeptide reads, in one-letter code: Lysozyme-like protein 4 (145 aa).

Positions 1 to 19 (MQLYLVLLLISYLLTPIGA) are cleaved as a signal peptide. The 126-residue stretch at 20-145 (SILGRCTVAK…LDRWLDGCDL (126 aa)) folds into the C-type lysozyme domain. Intrachain disulfides connect C25–C143, C49–C130, C84–C95, and C91–C109. Residue E54 is part of the active site.

This sequence belongs to the glycosyl hydrolase 22 family. Monomer. Expressed strongly in testis and in epididymis, and weakly in brain and lung. Detected in sperm (at protein level).

It localises to the secreted. It is found in the cytoplasmic vesicle. Its subcellular location is the secretory vesicle. The protein resides in the acrosome. The protein localises to the cell projection. It localises to the cilium. It is found in the flagellum. Functionally, may be involved in fertilization. Has no detectable bacteriolytic in vitro. Has no lysozyme activity in vitro. The sequence is that of Lysozyme-like protein 4 (Lyzl4) from Mus musculus (Mouse).